A 148-amino-acid polypeptide reads, in one-letter code: MQITSEIVNLIAAIMIFLGSIIALISSIGLIKFQDVFLRSHAATKSSTLSVLLTLVGVIIFFISSQGYLSVRLILALVFINLTSPVGGHLISRAAYRTGAYMYRKSDAPRQTNILLSSSENNTFEQLKQRAHEREERRRKTYEKEHDY.

The next 3 helical transmembrane spans lie at 11–31 (IAAIMIFLGSIIALISSIGLI), 51–71 (VLLTLVGVIIFFISSQGYLSV), and 72–92 (RLILALVFINLTSPVGGHLIS). Residues 125-148 (EQLKQRAHEREERRRKTYEKEHDY) are disordered. The segment covering 127 to 148 (LKQRAHEREERRRKTYEKEHDY) has biased composition (basic and acidic residues).

It belongs to the CPA3 antiporters (TC 2.A.63) subunit G family. May form a heterooligomeric complex that consists of seven subunits: mnhA2, mnhB2, mnhC2, mnhD2, mnhE2, mnhF2 and mnhG2.

Its subcellular location is the cell membrane. This Staphylococcus saprophyticus subsp. saprophyticus (strain ATCC 15305 / DSM 20229 / NCIMB 8711 / NCTC 7292 / S-41) protein is Putative antiporter subunit mnhG2 (mnhG2).